Here is a 133-residue protein sequence, read N- to C-terminus: Sigma factor-binding protein Crl (133 aa).

Residues 99–122 (TLDDFYVKLTKFVKEDCQLDLQAS) are essential for activity.

This sequence belongs to the Crl family.

Its subcellular location is the cytoplasm. In terms of biological role, binds to the sigma-S subunit of RNA polymerase, activating expression of sigma-S-regulated genes. Stimulates RNA polymerase holoenzyme formation and may bind to several other sigma factors, such as sigma-70 and sigma-32. In Photobacterium profundum (strain SS9), this protein is Sigma factor-binding protein Crl.